Reading from the N-terminus, the 209-residue chain is Translation initiation factor 2 subunit beta (209 aa).

One can recognise a TRAM domain in the interval 144-202 (TIEEGKEYVVEITEVGSSGEGRTNYKGYTIFVPGAKRGETVKVRIKKVKNDVAIGEIIE).

The protein belongs to the eIF-2-beta/eIF-5 family. Heterotrimer composed of an alpha, a beta and a gamma chain.

In terms of biological role, eIF-2 functions in the early steps of protein synthesis by forming a ternary complex with GTP and initiator tRNA. The polypeptide is Translation initiation factor 2 subunit beta (eif2b) (Thermoplasma acidophilum (strain ATCC 25905 / DSM 1728 / JCM 9062 / NBRC 15155 / AMRC-C165)).